A 78-amino-acid chain; its full sequence is Ferredoxin (78 aa).

4Fe-4S ferredoxin-type domains are found at residues 2 to 29 (FVIT…HEGP) and 30 to 59 (DQYY…QEEF). Cysteine 8 and cysteine 16 together coordinate [3Fe-4S] cluster. [4Fe-4S] cluster-binding residues include cysteine 20, cysteine 39, cysteine 42, and cysteine 45. Cysteine 49 is a binding site for [3Fe-4S] cluster.

[3Fe-4S] cluster is required as a cofactor. Requires [4Fe-4S] cluster as cofactor.

In terms of biological role, ferredoxins are iron-sulfur proteins that transfer electrons in a wide variety of metabolic reactions. The chain is Ferredoxin from Alicyclobacillus acidocaldarius subsp. acidocaldarius (Bacillus acidocaldarius).